Reading from the N-terminus, the 108-residue chain is MVNLFPVFTLIVIITILITTRELSTTMLIVSLVTDYIIINTQYTEQQHENNTFSMPQKNSFSESYNKDKKSNTHIPYQWLAPELKEAESKYWWGNYDPHSEPVLAGAS.

Residues 10–32 (LIVIITILITTRELSTTMLIVSL) traverse the membrane as a helical segment. A compositionally biased stretch (polar residues) spans 49-64 (ENNTFSMPQKNSFSES). The interval 49–69 (ENNTFSMPQKNSFSESYNKDK) is disordered. Asn50 carries N-linked (GlcNAc...) asparagine; by host glycosylation.

This sequence belongs to the asfivirus H108R family.

The protein localises to the virion membrane. This Ornithodoros (relapsing fever ticks) protein is Inner membrane protein H108R.